A 502-amino-acid polypeptide reads, in one-letter code: Alpha-globin transcription factor CP2 (502 aa).

A Grh/CP2 DB domain is found at 63 to 300 (EILPFQYVLC…SPGFNSSHSS (238 aa)). The interval 133–386 (EHQQLEGWRW…LFNALKGRMV (254 aa)) is DNA-binding. Residues 241–265 (KGADRKQKIDREKMEKRTPHEKEKY) are compositionally biased toward basic and acidic residues. Disordered stretches follow at residues 241 to 268 (KGAD…YQPS) and 294 to 326 (FNSS…NLLP). Serine 353 carries the post-translational modification Phosphoserine.

This sequence belongs to the grh/CP2 family. CP2 subfamily. As to quaternary structure, binds to DNA as a dimer. Interacts with UBP1 and PIAS1, and is probably part of a complex containing TFCP2, UBP1 and PIAS1. Component of the SSP (stage selector protein) complex, which appears to be a heteromer of TFCP2 and 2 copies of NFE4.

The protein resides in the nucleus. In terms of biological role, binds a variety of cellular promoters including fibrinogen, alpha-globin promoters. Activation of the alpha-globin promoter in erythroid cells is via synergistic interaction with UBP1. Functions as part of the SSP (stage selector protein) complex. Facilitates the interaction of the gamma-globin genes with enhancer elements contained in the locus control region in fetal erythroid cells. Interacts by binding to the stage selector element (SSE) in the proximal gamma-globin promoter. The polypeptide is Alpha-globin transcription factor CP2 (Tfcp2) (Mus musculus (Mouse)).